The primary structure comprises 59 residues: uncharacterized protein (59 aa).

A disordered region spans residues 27–59 (SCFQNRPPEPASFQNLRPEPASLQNLRTEPTSF). Polar residues predominate over residues 48–59 (SLQNLRTEPTSF).

This is an uncharacterized protein from Homo sapiens (Human).